The primary structure comprises 174 residues: IAGGEAIYAAGGGRCSLGFNVRSSSGATYALTAGHCTEIASTWYTNSGQTSLLGTRAGTSFPGNDYGLIRHSNASAADGRVYLYNGSYRDITGAGNAYVGQTVQRSGSTTGLHSGRVTGLNATVNYGGGDIVSGLIQTNVCAEPGDSGGALFAGSTALGLTSGGSGNCRTGGTT.

Cys15 and Cys36 are oxidised to a cystine. Residues His35, Asp65, and Ser147 each act as charge relay system in the active site. Residues Cys141 and Cys168 are joined by a disulfide bond.

Belongs to the peptidase S1 family.

Its subcellular location is the secreted. Its function is as follows. Broad substrate specificity. In Streptomyces fradiae (Streptomyces roseoflavus), this protein is Serine protease 2.